We begin with the raw amino-acid sequence, 341 residues long: Phosphate acyltransferase (341 aa).

This sequence belongs to the PlsX family. In terms of assembly, homodimer. Probably interacts with PlsY.

It localises to the cytoplasm. The catalysed reaction is a fatty acyl-[ACP] + phosphate = an acyl phosphate + holo-[ACP]. Its pathway is lipid metabolism; phospholipid metabolism. Its function is as follows. Catalyzes the reversible formation of acyl-phosphate (acyl-PO(4)) from acyl-[acyl-carrier-protein] (acyl-ACP). This enzyme utilizes acyl-ACP as fatty acyl donor, but not acyl-CoA. This chain is Phosphate acyltransferase, found in Lacticaseibacillus casei (strain BL23) (Lactobacillus casei).